A 319-amino-acid polypeptide reads, in one-letter code: tRNA N6-adenosine threonylcarbamoyltransferase (319 aa).

Fe cation contacts are provided by H110 and H114. Substrate is bound by residues V135–G139, D168, G181, D185, and N277. D301 lines the Fe cation pocket.

It belongs to the KAE1 / TsaD family. The cofactor is Fe(2+).

Its subcellular location is the cytoplasm. It carries out the reaction L-threonylcarbamoyladenylate + adenosine(37) in tRNA = N(6)-L-threonylcarbamoyladenosine(37) in tRNA + AMP + H(+). In terms of biological role, required for the formation of a threonylcarbamoyl group on adenosine at position 37 (t(6)A37) in tRNAs that read codons beginning with adenine. Is involved in the transfer of the threonylcarbamoyl moiety of threonylcarbamoyl-AMP (TC-AMP) to the N6 group of A37, together with TsaE and TsaB. TsaD likely plays a direct catalytic role in this reaction. The sequence is that of tRNA N6-adenosine threonylcarbamoyltransferase from Mycoplasma pneumoniae (strain ATCC 29342 / M129 / Subtype 1) (Mycoplasmoides pneumoniae).